The chain runs to 558 residues: Galactoside 2-alpha-L-fucosyltransferase (558 aa).

At 1–43 (MDQNSYRRRSSPIRTTTGGSKSVNFSELLQMKYLSSGTMKLTR) the chain is on the cytoplasmic side. A helical; Signal-anchor for type II membrane protein transmembrane segment spans residues 44–64 (TFTTCLIVFSVLVAFSMIFHQ). The Lumenal segment spans residues 65–558 (HPSDSNRIMG…EDISWGLKLV (494 aa)). N-linked (GlcNAc...) asparagine glycans are attached at residues Asn-88 and Asn-504.

Belongs to the glycosyltransferase 37 family. As to quaternary structure, homodimer. Interacts with MUR3, XLT2, XXT2 and XXT5. As to expression, expressed in roots, stems, leaves, flowers, siliques and seedlings.

Its subcellular location is the golgi apparatus. The protein resides in the golgi stack membrane. It is found in the golgi apparatus membrane. Functionally, involved in cell wall biosynthesis. Is both necessary and sufficient for the addition of the terminal fucosyl residue on xyloglucan side chains, but is not involved in the fucosylation of other cell wall components. Associates with other xyloglucan-synthesizing enzymes to form multiprotein complexes for xyloglucan synthesis in the Golgi. The sequence is that of Galactoside 2-alpha-L-fucosyltransferase (FUT1) from Arabidopsis thaliana (Mouse-ear cress).